The primary structure comprises 140 residues: Protein archease (140 aa).

Positions 11, 139, and 140 each coordinate Ca(2+).

It belongs to the archease family.

Activates the tRNA-splicing ligase complex by facilitating the enzymatic turnover of catalytic subunit RtcB. Acts by promoting the guanylylation of RtcB, a key intermediate step in tRNA ligation. Can also alter the NTP specificity of RtcB such that ATP, dGTP or ITP is used efficiently. The sequence is that of Protein archease from Methanopyrus kandleri (strain AV19 / DSM 6324 / JCM 9639 / NBRC 100938).